The chain runs to 127 residues: Small ribosomal subunit protein uS11 (127 aa).

Belongs to the universal ribosomal protein uS11 family. In terms of assembly, part of the 30S ribosomal subunit. Interacts with proteins S7 and S18. Binds to IF-3.

In terms of biological role, located on the platform of the 30S subunit, it bridges several disparate RNA helices of the 16S rRNA. Forms part of the Shine-Dalgarno cleft in the 70S ribosome. This chain is Small ribosomal subunit protein uS11, found in Streptococcus suis (strain 98HAH33).